The primary structure comprises 150 residues: Macrodomain Ter protein (150 aa).

Belongs to the MatP family. As to quaternary structure, homodimer.

The protein localises to the cytoplasm. In terms of biological role, required for spatial organization of the terminus region of the chromosome (Ter macrodomain) during the cell cycle. Prevents early segregation of duplicated Ter macrodomains during cell division. Binds specifically to matS, which is a 13 bp signature motif repeated within the Ter macrodomain. This Erwinia tasmaniensis (strain DSM 17950 / CFBP 7177 / CIP 109463 / NCPPB 4357 / Et1/99) protein is Macrodomain Ter protein.